A 366-amino-acid polypeptide reads, in one-letter code: Ribosomal RNA large subunit methyltransferase M (366 aa).

Residues Ser188, 221 to 224 (CPGG), Asp240, Asp260, and Asp277 each bind S-adenosyl-L-methionine. Lys306 functions as the Proton acceptor in the catalytic mechanism.

It belongs to the class I-like SAM-binding methyltransferase superfamily. RNA methyltransferase RlmE family. RlmM subfamily. As to quaternary structure, monomer.

It localises to the cytoplasm. It carries out the reaction cytidine(2498) in 23S rRNA + S-adenosyl-L-methionine = 2'-O-methylcytidine(2498) in 23S rRNA + S-adenosyl-L-homocysteine + H(+). Its function is as follows. Catalyzes the 2'-O-methylation at nucleotide C2498 in 23S rRNA. This chain is Ribosomal RNA large subunit methyltransferase M, found in Salmonella gallinarum (strain 287/91 / NCTC 13346).